We begin with the raw amino-acid sequence, 63 residues long: Prokaryotic ubiquitin-like protein Pup (63 aa).

The tract at residues 1–28 (MSDRQTQIPAGGGREDDHDDQVQSAGQV) is disordered. The ARC ATPase binding stretch occupies residues 19–57 (DDQVQSAGQVQVNTEGVDDLLDEIDGLLENNAEEFVRSY). Residue glutamate 63 forms an Isoglutamyl lysine isopeptide (Glu-Lys) (interchain with K-? in acceptor proteins) linkage.

It belongs to the prokaryotic ubiquitin-like protein family. Strongly interacts with the proteasome-associated ATPase ARC through a hydrophobic interface; the interacting region of Pup lies in its C-terminal half. There is one Pup binding site per ARC hexamer ring.

It functions in the pathway protein degradation; proteasomal Pup-dependent pathway. Its function is as follows. Protein modifier that is covalently attached to lysine residues of substrate proteins, thereby targeting them for proteasomal degradation. The tagging system is termed pupylation. The protein is Prokaryotic ubiquitin-like protein Pup of Corynebacterium efficiens (strain DSM 44549 / YS-314 / AJ 12310 / JCM 11189 / NBRC 100395).